Consider the following 474-residue polypeptide: TOM1-like protein 1 (474 aa).

Positions 22-154 (ATFAGVLTED…DLLKKGVQFP (133 aa)) constitute a VHS domain. Residues 153-180 (FPPSDGEPETRQEAGQISPNRPTSVPTA) form a disordered region. A compositionally biased stretch (polar residues) spans 165 to 178 (EAGQISPNRPTSVP). A Phosphoserine modification is found at serine 170. The region spanning 199–287 (EQIGKLHSEL…AVLGYERFTR (89 aa)) is the GAT domain. The segment at 291–317 (RLLEQKRNRTEATRTSSEPSAPSCDLL) is disordered. Positions 293–302 (LEQKRNRTEA) are enriched in basic and acidic residues. Phosphoserine occurs at positions 313 and 320. The interval 392-395 (YDNF) is interaction with GRB2. The SH3-binding motif lies at 420–424 (LPPLP). Positions 441-444 (YEVM) are interaction with PIK3R1. Residue tyrosine 457 is modified to Phosphotyrosine. Residues 457–460 (YEEI) carry the SH2-binding motif.

The protein belongs to the TOM1 family. As to quaternary structure, interacts with LYN. Interacts with the SH2 and SH3 domains of FYN when phosphorylated. Also interacts with GRB2 and PIK3R1 when phosphorylated. In terms of processing, phosphorylated on tyrosines by LYN. Phosphorylated on tyrosines by FYN. As to expression, strongly expressed in brain and kidney, expressed at intermediate levels skin and heart, and weakly expressed in thymus. Not expressed in liver and spleen.

It is found in the golgi apparatus. The protein resides in the golgi stack. Its subcellular location is the endosome membrane. It localises to the cytoplasm. The protein localises to the membrane. Functionally, probable adapter protein involved in signaling pathways. Interacts with the SH2 and SH3 domains of various signaling proteins when it is phosphorylated. May promote FYN activation, possibly by disrupting intramolecular SH3-dependent interactions. This Mus musculus (Mouse) protein is TOM1-like protein 1 (Tom1l1).